The sequence spans 129 residues: Large ribosomal subunit protein eL32 (129 aa).

It belongs to the eukaryotic ribosomal protein eL32 family.

The protein is Large ribosomal subunit protein eL32 (rpl32e) of Archaeoglobus fulgidus (strain ATCC 49558 / DSM 4304 / JCM 9628 / NBRC 100126 / VC-16).